The following is a 153-amino-acid chain: Endoribonuclease YbeY (153 aa).

Residues His-114, His-118, and His-124 each contribute to the Zn(2+) site.

It belongs to the endoribonuclease YbeY family. It depends on Zn(2+) as a cofactor.

The protein resides in the cytoplasm. In terms of biological role, single strand-specific metallo-endoribonuclease involved in late-stage 70S ribosome quality control and in maturation of the 3' terminus of the 16S rRNA. In Shewanella baltica (strain OS185), this protein is Endoribonuclease YbeY.